The sequence spans 196 residues: Protein GrpE (196 aa).

A disordered region spans residues 1–40 (MSSKEQKTPEGQAPEEIIMDQHEEVEAVEPNDSAEQVDPR).

The protein belongs to the GrpE family. As to quaternary structure, homodimer.

The protein localises to the cytoplasm. Participates actively in the response to hyperosmotic and heat shock by preventing the aggregation of stress-denatured proteins, in association with DnaK and GrpE. It is the nucleotide exchange factor for DnaK and may function as a thermosensor. Unfolded proteins bind initially to DnaJ; upon interaction with the DnaJ-bound protein, DnaK hydrolyzes its bound ATP, resulting in the formation of a stable complex. GrpE releases ADP from DnaK; ATP binding to DnaK triggers the release of the substrate protein, thus completing the reaction cycle. Several rounds of ATP-dependent interactions between DnaJ, DnaK and GrpE are required for fully efficient folding. This chain is Protein GrpE, found in Salmonella enteritidis PT4 (strain P125109).